Consider the following 441-residue polypeptide: Na(+)/H(+) antiporter NhaA 2 (441 aa).

Helical transmembrane passes span 34-54 (VGGAVLLVASAVALVWANSPW), 77-97 (LTLGTWAADGLLAVFFLVVGL), 115-135 (ALPMAAAVGGMVVPALIFVAV), 146-166 (GWAIPTATDIAFAVAVLAVIS), 176-196 (FLLTLAVVDDLLAVTVIAVFY), 199-219 (EINLTALGLSIVPLALFALCV), 225-245 (SWWLLLPLGVATWVLMHESGV), 249-269 (VAGVLLGFTVPVLRSVAAGGP), 290-310 (VAVPVFAFFAAGVAIGGVSGL), 317-337 (PITLGIILGLVVGKPVGIFLT), 355-375 (WIDVFGVALLAGIGFTVSLLI), and 389-409 (FVKVGVLTGSLVAALIAAVLL).

Belongs to the NhaA Na(+)/H(+) (TC 2.A.33) antiporter family.

The protein localises to the cell membrane. It catalyses the reaction Na(+)(in) + 2 H(+)(out) = Na(+)(out) + 2 H(+)(in). In terms of biological role, na(+)/H(+) antiporter that extrudes sodium in exchange for external protons. The protein is Na(+)/H(+) antiporter NhaA 2 of Mycobacterium sp. (strain MCS).